Reading from the N-terminus, the 235-residue chain is Putative N-acetylmannosamine-6-phosphate 2-epimerase (235 aa).

Belongs to the NanE family.

It carries out the reaction an N-acyl-D-glucosamine 6-phosphate = an N-acyl-D-mannosamine 6-phosphate. The protein operates within amino-sugar metabolism; N-acetylneuraminate degradation; D-fructose 6-phosphate from N-acetylneuraminate: step 3/5. Functionally, converts N-acetylmannosamine-6-phosphate (ManNAc-6-P) to N-acetylglucosamine-6-phosphate (GlcNAc-6-P). This Photobacterium profundum (strain SS9) protein is Putative N-acetylmannosamine-6-phosphate 2-epimerase.